The primary structure comprises 614 residues: Fructokinase-like 2, chloroplastic (614 aa).

A chloroplast-targeting transit peptide spans 1 to 44 (MASLSFTQFLSFPRCNADVPCLLQSHGFVKFRGERWNGKQSFSM). Disordered regions lie at residues 47–75 (GRRK…KPSK) and 542–592 (GYPP…YVMK). Acidic residues predominate over residues 548–563 (DMEEEEDDEEEDEVES). A compositionally biased stretch (basic and acidic residues) spans 571-583 (ITEKEYRTSKPYD).

The protein belongs to the carbohydrate kinase PfkB family. Interacts with CITRX/TRXz. Binds to FLN1 and PTAC5. Associates with the plastid-encoded RNA polymerase (PEP) complex.

The protein localises to the plastid. It is found in the chloroplast. Functionally, required for proper chloroplast development, most likely through regulating plastid-encoded polymerase (PEP) dependent chloroplast transcription. Acts as a component of the transcriptionally active plastid chromosome that is required for plastid gene expression. This chain is Fructokinase-like 2, chloroplastic, found in Arabidopsis thaliana (Mouse-ear cress).